Consider the following 158-residue polypeptide: Regulator of sigma D (158 aa).

Belongs to the Rsd/AlgQ family. In terms of assembly, interacts with RpoD.

The protein localises to the cytoplasm. Its function is as follows. Binds RpoD and negatively regulates RpoD-mediated transcription activation by preventing the interaction between the primary sigma factor RpoD with the catalytic core of the RNA polymerase and with promoter DNA. May be involved in replacement of the RNA polymerase sigma subunit from RpoD to RpoS during the transition from exponential growth to the stationary phase. The polypeptide is Regulator of sigma D (Shigella dysenteriae serotype 1 (strain Sd197)).